The primary structure comprises 62 residues: Large ribosomal subunit protein uL30 (62 aa).

This sequence belongs to the universal ribosomal protein uL30 family. Part of the 50S ribosomal subunit.

In Shewanella frigidimarina (strain NCIMB 400), this protein is Large ribosomal subunit protein uL30.